The chain runs to 306 residues: tRNA dimethylallyltransferase (306 aa).

11–18 (GPTAVGKS) provides a ligand contact to ATP. Position 13–18 (13–18 (TAVGKS)) interacts with substrate. An interaction with substrate tRNA region spans residues 35 to 38 (DSIQ).

This sequence belongs to the IPP transferase family. Monomer. Mg(2+) serves as cofactor.

The catalysed reaction is adenosine(37) in tRNA + dimethylallyl diphosphate = N(6)-dimethylallyladenosine(37) in tRNA + diphosphate. Functionally, catalyzes the transfer of a dimethylallyl group onto the adenine at position 37 in tRNAs that read codons beginning with uridine, leading to the formation of N6-(dimethylallyl)adenosine (i(6)A). In Borreliella burgdorferi (strain ZS7) (Borrelia burgdorferi), this protein is tRNA dimethylallyltransferase.